The sequence spans 412 residues: MSARFTVKKLGAQGDGIAETESGDLFIPFTLPGESVTAARERDRAALMAVLEASLLRIEPACRHFTECGGCALQHFEAEAYRQWKRDKVVHALKGIDCSIDELVACAPHTRRRVVLAARRSETGMLLGFNRHLSPEIISISECPISLPEIVAALDRLRALADLICATTKSFRMAVTVTGSGLDVAVYESGKLGEHQRRIASNFVLAQGFARLSIDDEIIIEPRKPVVMFGSVAVAVPPGAFLQATEAAEQAMAEIVGTHLKRAKKVADLFAGCGSFALRLAAKSEVHAVEGDAAALSALDRGARFATGLKRVTGERRDLFRRPLTFKELNTFDGLVFDPPRAGAEDQSKQIARSDVPFVAAVSCNPVTLARDLRILIDGGYQVKSVTPIDQFLWSSHVEAVALLDKPRRRRG.

Residues C62, C68, C71, and C143 each coordinate [4Fe-4S] cluster. 4 residues coordinate S-adenosyl-L-methionine: Q243, F270, E290, and D338. C364 serves as the catalytic Nucleophile.

The protein belongs to the class I-like SAM-binding methyltransferase superfamily. RNA M5U methyltransferase family.

This is an uncharacterized protein from Mesorhizobium japonicum (strain LMG 29417 / CECT 9101 / MAFF 303099) (Mesorhizobium loti (strain MAFF 303099)).